The chain runs to 117 residues: Large ribosomal subunit protein bL20c (117 aa).

It belongs to the bacterial ribosomal protein bL20 family.

It localises to the plastid. It is found in the chloroplast. Functionally, binds directly to 23S ribosomal RNA and is necessary for the in vitro assembly process of the 50S ribosomal subunit. It is not involved in the protein synthesizing functions of that subunit. This Bigelowiella natans (Pedinomonas minutissima) protein is Large ribosomal subunit protein bL20c (rpl20).